We begin with the raw amino-acid sequence, 501 residues long: ATP synthase subunit alpha (501 aa).

169 to 176 (GDRQTGKT) is an ATP binding site.

It belongs to the ATPase alpha/beta chains family. In terms of assembly, F-type ATPases have 2 components, CF(1) - the catalytic core - and CF(0) - the membrane proton channel. CF(1) has five subunits: alpha(3), beta(3), gamma(1), delta(1), epsilon(1). CF(0) has three main subunits: a(1), b(2) and c(9-12). The alpha and beta chains form an alternating ring which encloses part of the gamma chain. CF(1) is attached to CF(0) by a central stalk formed by the gamma and epsilon chains, while a peripheral stalk is formed by the delta and b chains.

It is found in the cell membrane. It catalyses the reaction ATP + H2O + 4 H(+)(in) = ADP + phosphate + 5 H(+)(out). Its function is as follows. Produces ATP from ADP in the presence of a proton gradient across the membrane. The alpha chain is a regulatory subunit. In Streptococcus pneumoniae serotype 2 (strain D39 / NCTC 7466), this protein is ATP synthase subunit alpha.